The primary structure comprises 242 residues: Anti-Pycsar protein Apyc1 (242 aa).

A beta-lactamase-like region spans residues 17–216 (FNNNALIEQD…EMQSIIKLMH (200 aa)). The Zn(2+) site is built by histidine 59, histidine 61, aspartate 63, histidine 64, histidine 142, aspartate 162, and histidine 216.

Belongs to the anti-Pycsar protein Apyc1 family. As to quaternary structure, homodimer. Requires Zn(2+) as cofactor.

It catalyses the reaction 3',5'-cyclic CMP + H2O = CMP + H(+). The catalysed reaction is 3',5'-cyclic UMP + H2O = UMP + H(+). Counteracts the endogenous Pycsar antiviral defense system. Phosphodiesterase that enables metal-dependent hydrolysis of host cyclic nucleotide Pycsar defense signals such as cCMP and cUMP. The chain is Anti-Pycsar protein Apyc1 from Saccharibacillus brassicae.